The following is a 299-amino-acid chain: Elongation factor Ts (299 aa).

The interval 82–85 (TDFV) is involved in Mg(2+) ion dislocation from EF-Tu.

Belongs to the EF-Ts family.

Its subcellular location is the cytoplasm. Its function is as follows. Associates with the EF-Tu.GDP complex and induces the exchange of GDP to GTP. It remains bound to the aminoacyl-tRNA.EF-Tu.GTP complex up to the GTP hydrolysis stage on the ribosome. The chain is Elongation factor Ts from Dechloromonas aromatica (strain RCB).